Reading from the N-terminus, the 359-residue chain is MAAEGKNVLIMAGGTGGHVFPALACAREFQARGYSVHWLGTPRGIENELVPQAGLPLHLIQVSGLRGKGKLSLLKAPFTLVKAVLQARRIIRQLKPVCVLGFGGYVTGPGGVAARLCGVPLVIHEQNARAGTANRLLVPLSARVCEAFPNTFEASDKRRTTGNPVRPELFMDAQRTPLGERRARLLVLGGSLGAEPLNKLLPKALSEVPAALRPEVFHQAGKQHAPITAERYHEAGVAAQVEPFIKDMAQAYGWADLVVCRAGALTVSELAAAGLPSMLVPLPHAIDDHQTHNAQYLAREGAAFLMPQATTGAAQLAERLNEVLMQPEKLNVMAGTARRLAKPAATSTVVDICLEVAHG.

Residues 15–17, Asn127, Arg166, Ser191, Ile245, 264–269, and Gln290 contribute to the UDP-N-acetyl-alpha-D-glucosamine site; these read TGG and ALTVSE.

Belongs to the glycosyltransferase 28 family. MurG subfamily.

The protein resides in the cell inner membrane. It carries out the reaction di-trans,octa-cis-undecaprenyl diphospho-N-acetyl-alpha-D-muramoyl-L-alanyl-D-glutamyl-meso-2,6-diaminopimeloyl-D-alanyl-D-alanine + UDP-N-acetyl-alpha-D-glucosamine = di-trans,octa-cis-undecaprenyl diphospho-[N-acetyl-alpha-D-glucosaminyl-(1-&gt;4)]-N-acetyl-alpha-D-muramoyl-L-alanyl-D-glutamyl-meso-2,6-diaminopimeloyl-D-alanyl-D-alanine + UDP + H(+). The protein operates within cell wall biogenesis; peptidoglycan biosynthesis. Its function is as follows. Cell wall formation. Catalyzes the transfer of a GlcNAc subunit on undecaprenyl-pyrophosphoryl-MurNAc-pentapeptide (lipid intermediate I) to form undecaprenyl-pyrophosphoryl-MurNAc-(pentapeptide)GlcNAc (lipid intermediate II). This chain is UDP-N-acetylglucosamine--N-acetylmuramyl-(pentapeptide) pyrophosphoryl-undecaprenol N-acetylglucosamine transferase, found in Pseudomonas putida (strain ATCC 47054 / DSM 6125 / CFBP 8728 / NCIMB 11950 / KT2440).